Reading from the N-terminus, the 255-residue chain is Indole-3-glycerol phosphate synthase (255 aa).

It belongs to the TrpC family.

The enzyme catalyses 1-(2-carboxyphenylamino)-1-deoxy-D-ribulose 5-phosphate + H(+) = (1S,2R)-1-C-(indol-3-yl)glycerol 3-phosphate + CO2 + H2O. Its pathway is amino-acid biosynthesis; L-tryptophan biosynthesis; L-tryptophan from chorismate: step 4/5. This Streptococcus pneumoniae serotype 2 (strain D39 / NCTC 7466) protein is Indole-3-glycerol phosphate synthase.